Here is a 376-residue protein sequence, read N- to C-terminus: MARVEL domain-containing protein 3 (376 aa).

The span at M1–P95 shows a compositional bias: basic and acidic residues. Residues M1–A134 form a disordered region. The Cytoplasmic segment spans residues M1–R173. The MARVEL domain occupies Y168 to R361. Residues A174–S194 form a helical membrane-spanning segment. The Extracellular segment spans residues Y195 to A247. Residues A248–L268 traverse the membrane as a helical segment. The Cytoplasmic portion of the chain corresponds to R269–P275. The chain crosses the membrane as a helical span at residues L276–L296. Over Y297–D335 the chain is Extracellular. Residues I336–A356 form a helical membrane-spanning segment. Over F357 to F376 the chain is Cytoplasmic.

Widely expressed with highest levels in small intestine, colon, stomach and lung. Liver expresses only isoform 2.

Its subcellular location is the membrane. The protein resides in the cell junction. The protein localises to the tight junction. In terms of biological role, as a component of tight junctions, plays a role in paracellular ion conductivity. The protein is MARVEL domain-containing protein 3 (Marveld3) of Mus musculus (Mouse).